The following is a 239-amino-acid chain: MIEEQSDNVENKDENVSMDNNISENLPIAEEQTNEDKKLPDDNNEKIDAEDLKNTITNNDARLEQLEKEHETLKSQYVRIAADFDNFRKRQSRDQDDLKIQLVSKALTAILPIVDNFERARQQLKPEGDEAQTLHRSYQGLYKQLVEVLKQQGVAPMRVVGQQFDPNLHEAVLREPSEEQNEDIIIEELQRGYHLEGKVLRHALVKVSMGPGQQISQESEEKDKVDKDIDSEGSISEEN.

Disordered stretches follow at residues 1 to 53 and 210 to 239; these read MIEE…EDLK and GPGQ…SEEN. Composition is skewed to basic and acidic residues over residues 34 to 53 and 219 to 230; these read NEDK…EDLK and SEEKDKVDKDID.

It belongs to the GrpE family. In terms of assembly, homodimer.

The protein resides in the cytoplasm. Its function is as follows. Participates actively in the response to hyperosmotic and heat shock by preventing the aggregation of stress-denatured proteins, in association with DnaK and GrpE. It is the nucleotide exchange factor for DnaK and may function as a thermosensor. Unfolded proteins bind initially to DnaJ; upon interaction with the DnaJ-bound protein, DnaK hydrolyzes its bound ATP, resulting in the formation of a stable complex. GrpE releases ADP from DnaK; ATP binding to DnaK triggers the release of the substrate protein, thus completing the reaction cycle. Several rounds of ATP-dependent interactions between DnaJ, DnaK and GrpE are required for fully efficient folding. The chain is Protein GrpE from Prochlorococcus marinus (strain MIT 9515).